Consider the following 155-residue polypeptide: Superoxide dismutase [Cu-Zn] (155 aa).

Cu cation is bound by residues His-47, His-49, and His-64. Residues Cys-58 and Cys-147 are joined by a disulfide bond. Zn(2+)-binding residues include His-64, His-72, His-81, and Asp-84. A Cu cation-binding site is contributed by His-121. Arg-144 provides a ligand contact to substrate.

This sequence belongs to the Cu-Zn superoxide dismutase family. In terms of assembly, homodimer. Cu cation serves as cofactor. The cofactor is Zn(2+).

The protein resides in the cytoplasm. It catalyses the reaction 2 superoxide + 2 H(+) = H2O2 + O2. Functionally, destroys radicals which are normally produced within the cells and which are toxic to biological systems. The protein is Superoxide dismutase [Cu-Zn] (SOD1) of Kluyveromyces lactis (strain ATCC 8585 / CBS 2359 / DSM 70799 / NBRC 1267 / NRRL Y-1140 / WM37) (Yeast).